The sequence spans 207 residues: NADH-quinone oxidoreductase subunit A (207 aa).

3 helical membrane passes run Trp-6–Pro-26, Leu-62–Val-82, and Ala-87–Val-107.

Belongs to the complex I subunit 3 family. As to quaternary structure, NDH-1 is composed of 14 different subunits. Subunits NuoA, H, J, K, L, M, N constitute the membrane sector of the complex.

It is found in the cell inner membrane. The enzyme catalyses a quinone + NADH + 5 H(+)(in) = a quinol + NAD(+) + 4 H(+)(out). Its function is as follows. NDH-1 shuttles electrons from NADH, via FMN and iron-sulfur (Fe-S) centers, to quinones in the respiratory chain. The immediate electron acceptor for the enzyme in this species is believed to be ubiquinone. Couples the redox reaction to proton translocation (for every two electrons transferred, four hydrogen ions are translocated across the cytoplasmic membrane), and thus conserves the redox energy in a proton gradient. This is NADH-quinone oxidoreductase subunit A from Psychrobacter arcticus (strain DSM 17307 / VKM B-2377 / 273-4).